A 400-amino-acid chain; its full sequence is Probable phospho-2-dehydro-3-deoxyheptonate aldolase (400 aa).

The protein belongs to the class-II DAHP synthase family.

It carries out the reaction D-erythrose 4-phosphate + phosphoenolpyruvate + H2O = 7-phospho-2-dehydro-3-deoxy-D-arabino-heptonate + phosphate. It participates in antibiotic biosynthesis; phenazine biosynthesis. The polypeptide is Probable phospho-2-dehydro-3-deoxyheptonate aldolase (phzC) (Pseudomonas fluorescens).